The chain runs to 576 residues: Laccase-1 (576 aa).

The N-terminal stretch at 1 to 19 (MARTTFLVSVSLFVSAVLA) is a signal peptide. 2 Plastocyanin-like domains span residues 21–145 (TVEY…LVIY) and 157–304 (VDDE…LVYE). The N-linked (GlcNAc...) asparagine glycan is linked to asparagine 41. Cu cation-binding residues include histidine 82, histidine 84, histidine 127, and histidine 129. Cysteine 103 and cysteine 562 form a disulfide bridge. Residues asparagine 182, asparagine 228, asparagine 294, and asparagine 368 are each glycosylated (N-linked (GlcNAc...) asparagine). The 201-residue stretch at 376–576 (DESKLVPLEY…NWLKSNPGQL (201 aa)) folds into the Plastocyanin-like 3 domain. 7 residues coordinate Cu cation: histidine 471, histidine 474, histidine 476, histidine 523, cysteine 524, histidine 525, and histidine 529.

The protein belongs to the multicopper oxidase family. In terms of assembly, homodimer. The cofactor is Cu cation. In mycelia, at a lower level than LCC4.

It localises to the secreted. It carries out the reaction 4 hydroquinone + O2 = 4 benzosemiquinone + 2 H2O. Its function is as follows. Lignin degradation and detoxification of lignin-derived products. This is Laccase-1 (LCC1) from Thanatephorus cucumeris (Black scurf of potato).